The sequence spans 428 residues: D-amino acid dehydrogenase (428 aa).

3-17 is an FAD binding site; that stretch reads VVILGSGVVGVASAY.

This sequence belongs to the DadA oxidoreductase family. Requires FAD as cofactor.

It carries out the reaction a D-alpha-amino acid + A + H2O = a 2-oxocarboxylate + AH2 + NH4(+). The protein operates within amino-acid degradation; D-alanine degradation; NH(3) and pyruvate from D-alanine: step 1/1. Oxidative deamination of D-amino acids. This is D-amino acid dehydrogenase from Burkholderia mallei (strain NCTC 10247).